A 237-amino-acid polypeptide reads, in one-letter code: Ribose-5-phosphate isomerase A (237 aa).

Residues 33 to 36 (TGST), 90 to 93 (DGAD), and 103 to 106 (KGGG) each bind substrate. Glu112 serves as the catalytic Proton acceptor. Residue Lys130 participates in substrate binding.

This sequence belongs to the ribose 5-phosphate isomerase family. In terms of assembly, homodimer.

The catalysed reaction is aldehydo-D-ribose 5-phosphate = D-ribulose 5-phosphate. It participates in carbohydrate degradation; pentose phosphate pathway; D-ribose 5-phosphate from D-ribulose 5-phosphate (non-oxidative stage): step 1/1. Functionally, catalyzes the reversible conversion of ribose-5-phosphate to ribulose 5-phosphate. The sequence is that of Ribose-5-phosphate isomerase A from Trichodesmium erythraeum (strain IMS101).